The primary structure comprises 277 residues: MASAGGEDCESPAPEADRPHQRPFLIGVSGGTASGKSTVCEKIMELLGQNEVEQRQRKVVILSQDRFYKVLTAEQKAKALKGQYNFDHPDAFDNDLMHRTLKNIVEGKTVEVPTYDFVTHSRLPETTVVYPADVVLFEGILVFYSQEIRDMFHLRLFVDTDSDVRLSRRVLRDVRRGRDLEQILTQYTTFVKPAFEEFCLPTKKYADVIIPRGVDNMVAINLIVQHIQDILNGDICKWHRGGSNGRSYKRTFSEPGDHPGMLTSGKRSHLESSSRPH.

Residues Met-1–Gly-30 form a disordered region. Residue Gly-30–Thr-38 participates in ATP binding. Residue Asp-65 is part of the active site. Residues Asp-87, Tyr-115, His-120, Arg-169, Arg-178, and Gln-186 each contribute to the substrate site. Asp-215 provides a ligand contact to ATP. Residues Ser-247–His-277 are disordered. Residue Thr-251 is modified to Phosphothreonine. A Phosphoserine modification is found at Ser-253. Basic and acidic residues predominate over residues Ser-268–His-277.

Belongs to the uridine kinase family. In terms of tissue distribution, ubiquitous.

It catalyses the reaction uridine + ATP = UMP + ADP + H(+). The catalysed reaction is cytidine + ATP = CMP + ADP + H(+). The protein operates within pyrimidine metabolism; CTP biosynthesis via salvage pathway; CTP from cytidine: step 1/3. It participates in pyrimidine metabolism; UMP biosynthesis via salvage pathway; UMP from uridine: step 1/1. Phosphorylates uridine and cytidine to uridine monophosphate and cytidine monophosphate. Does not phosphorylate deoxyribonucleosides or purine ribonucleosides. Can use ATP or GTP as a phosphate donor. Can also phosphorylate cytidine and uridine nucleoside analogs such as 6-azauridine, 5-fluorouridine, 4-thiouridine, 5-bromouridine, N(4)-acetylcytidine, N(4)-benzoylcytidine, 5-fluorocytidine, 2-thiocytidine, 5-methylcytidine, and N(4)-anisoylcytidine. The sequence is that of Uridine-cytidine kinase 1 (UCK1) from Homo sapiens (Human).